The primary structure comprises 389 residues: G2/M cell-cycle inhibitor DR6 (389 aa).

Belongs to the Roseolovirus DR6 family.

It localises to the host nucleus. In terms of biological role, inhibits the host G2/M cell-cycle progression in a p53-independent manner. This is G2/M cell-cycle inhibitor DR6 (DR6L) from Homo sapiens (Human).